A 266-amino-acid chain; its full sequence is Ribosomal RNA small subunit methyltransferase A (266 aa).

S-adenosyl-L-methionine contacts are provided by N10, I12, G37, E58, D82, and N105.

The protein belongs to the class I-like SAM-binding methyltransferase superfamily. rRNA adenine N(6)-methyltransferase family. RsmA subfamily.

The protein resides in the cytoplasm. It catalyses the reaction adenosine(1518)/adenosine(1519) in 16S rRNA + 4 S-adenosyl-L-methionine = N(6)-dimethyladenosine(1518)/N(6)-dimethyladenosine(1519) in 16S rRNA + 4 S-adenosyl-L-homocysteine + 4 H(+). In terms of biological role, specifically dimethylates two adjacent adenosines (A1518 and A1519) in the loop of a conserved hairpin near the 3'-end of 16S rRNA in the 30S particle. May play a critical role in biogenesis of 30S subunits. In Mycoplasma capricolum subsp. capricolum (strain California kid / ATCC 27343 / NCTC 10154), this protein is Ribosomal RNA small subunit methyltransferase A.